A 191-amino-acid polypeptide reads, in one-letter code: Protein GrpE (191 aa).

Over residues 1-21 (MSDKKKNAEEFEETFSDKTSE) the composition is skewed to basic and acidic residues. A disordered region spans residues 1–39 (MSDKKKNAEEFEETFSDKTSEDESTVENETVEENENEDV). The segment covering 22–38 (DESTVENETVEENENED) has biased composition (acidic residues).

Belongs to the GrpE family. In terms of assembly, homodimer.

It is found in the cytoplasm. Participates actively in the response to hyperosmotic and heat shock by preventing the aggregation of stress-denatured proteins, in association with DnaK and GrpE. It is the nucleotide exchange factor for DnaK and may function as a thermosensor. Unfolded proteins bind initially to DnaJ; upon interaction with the DnaJ-bound protein, DnaK hydrolyzes its bound ATP, resulting in the formation of a stable complex. GrpE releases ADP from DnaK; ATP binding to DnaK triggers the release of the substrate protein, thus completing the reaction cycle. Several rounds of ATP-dependent interactions between DnaJ, DnaK and GrpE are required for fully efficient folding. This Tetragenococcus halophilus (Pediococcus halophilus) protein is Protein GrpE.